The primary structure comprises 509 residues: Type II methyltransferase M.BsoBI (509 aa).

Belongs to the N(4)/N(6)-methyltransferase family. N(4) subfamily.

It carries out the reaction a 2'-deoxycytidine in DNA + S-adenosyl-L-methionine = an N(4)-methyl-2'-deoxycytidine in DNA + S-adenosyl-L-homocysteine + H(+). Its function is as follows. An alpha subtype methylase that recognizes the double-stranded sequence 5'-CYCGRG-3', methylates C-1 on both strands, and protects the DNA from cleavage by the BsoBI endonuclease. This is Type II methyltransferase M.BsoBI from Geobacillus stearothermophilus (Bacillus stearothermophilus).